Reading from the N-terminus, the 185-residue chain is Probable DNA-directed RNA polymerase subunit delta (185 aa).

The 68-residue stretch at 14–81 folds into the HTH HARE-type domain; that stretch reads LSMIEVAHAI…GDNTWGLRAW (68 aa). The tract at residues 90-185 is disordered; that stretch reads ATVGENEEDE…DEEDEDEDDE (96 aa). Acidic residues-rich tracts occupy residues 117–167 and 175–185; these read DTDD…DDGI and HDEEDEDEDDE.

It belongs to the RpoE family. As to quaternary structure, RNAP is composed of a core of 2 alpha, a beta and a beta' subunits. The core is associated with a delta subunit and one of several sigma factors.

Its function is as follows. Participates in both the initiation and recycling phases of transcription. In the presence of the delta subunit, RNAP displays an increased specificity of transcription, a decreased affinity for nucleic acids, and an increased efficiency of RNA synthesis because of enhanced recycling. The polypeptide is Probable DNA-directed RNA polymerase subunit delta (Limosilactobacillus reuteri (strain DSM 20016) (Lactobacillus reuteri)).